Reading from the N-terminus, the 88-residue chain is Small ribosomal subunit protein uS15 (88 aa).

It belongs to the universal ribosomal protein uS15 family. As to quaternary structure, part of the 30S ribosomal subunit. Forms a bridge to the 50S subunit in the 70S ribosome, contacting the 23S rRNA.

One of the primary rRNA binding proteins, it binds directly to 16S rRNA where it helps nucleate assembly of the platform of the 30S subunit by binding and bridging several RNA helices of the 16S rRNA. Its function is as follows. Forms an intersubunit bridge (bridge B4) with the 23S rRNA of the 50S subunit in the ribosome. This is Small ribosomal subunit protein uS15 from Variovorax paradoxus (strain S110).